We begin with the raw amino-acid sequence, 475 residues long: Sulfate adenylyltransferase subunit 1 (475 aa).

A tr-type G domain is found at 25–239 (KSLLRFLTCG…EVLETVEIQR (215 aa)). Residues 34–41 (GSVDDGKS) are G1. 34–41 (GSVDDGKS) lines the GTP pocket. Residues 92-96 (GITID) form a G2 region. The interval 113–116 (DTPG) is G3. GTP-binding positions include 113-117 (DTPGH) and 168-171 (NKMD). The segment at 168–171 (NKMD) is G4. The tract at residues 206–208 (SAL) is G5.

This sequence belongs to the TRAFAC class translation factor GTPase superfamily. Classic translation factor GTPase family. CysN/NodQ subfamily. Heterodimer composed of CysD, the smaller subunit, and CysN.

The catalysed reaction is sulfate + ATP + H(+) = adenosine 5'-phosphosulfate + diphosphate. It participates in sulfur metabolism; hydrogen sulfide biosynthesis; sulfite from sulfate: step 1/3. Its function is as follows. With CysD forms the ATP sulfurylase (ATPS) that catalyzes the adenylation of sulfate producing adenosine 5'-phosphosulfate (APS) and diphosphate, the first enzymatic step in sulfur assimilation pathway. APS synthesis involves the formation of a high-energy phosphoric-sulfuric acid anhydride bond driven by GTP hydrolysis by CysN coupled to ATP hydrolysis by CysD. This is Sulfate adenylyltransferase subunit 1 from Escherichia coli O157:H7.